Here is a 2148-residue protein sequence, read N- to C-terminus: Polyketide synthase 1 (2148 aa).

The N-terminal acylcarrier protein transacylase domain (SAT) stretch occupies residues 19–261; sequence FIFGDQSSCN…TPLAVHAPYH (243 aa). The 436-residue stretch at 394 to 829 folds into the Ketosynthase family 3 (KS3) domain; it reads DSKIAIIGMS…GGNTALLVED (436 aa). Catalysis depends on for beta-ketoacyl synthase activity residues C566, H701, and H745. Positions 929–1233 are malonyl-CoA:ACP transacylase (MAT) domain; the sequence is AFVFSGQGSQ…PSLMRNKDGW (305 aa). Residue S1018 is the For acyl/malonyl transferase activity of the active site. Residues 1310-1624 are product template (PT) domain; sequence TASVHRIVHE…RKVLNTAMPP (315 aa). Residues 1314–1447 form an N-terminal hotdog fold region; it reads HRIVHESVDK…SSLHFEQPKV (134 aa). In terms of domain architecture, PKS/mFAS DH spans 1314-1619; that stretch reads HRIVHESVDK…FQGIPRKVLN (306 aa). The Proton acceptor; for dehydratase activity role is filled by H1346. A C-terminal hotdog fold region spans residues 1474–1619; sequence LNSRMSSGVI…FQGIPRKVLN (146 aa). D1533 acts as the Proton donor; for dehydratase activity in catalysis. Positions 1619–1655 are disordered; sequence NTAMPPPKSQNEAQVHSSPAKSRPKPPGSASSVHSGR. Positions 1627-1638 are enriched in polar residues; sequence SQNEAQVHSSPA. Residues 1678 to 1752 form the Carrier 1 domain; it reads RDPMQALFKI…DLATHLGFDT (75 aa). S1712 carries the post-translational modification O-(pantetheine 4'-phosphoryl)serine. Over residues 1756 to 1769 the composition is skewed to low complexity; sequence DQSSGQSSSCGGLS. Residues 1756–1796 form a disordered region; it reads DQSSGQSSSCGGLSPRSDSTGEITSNATTPPSLSPRGSVSG. The segment covering 1771 to 1796 has biased composition (polar residues); that stretch reads RSDSTGEITSNATTPPSLSPRGSVSG. A Carrier 2 domain is found at 1793-1870; that stretch reads SVSGSQCKDV…SFKHMFQQGH (78 aa). S1830 bears the O-(pantetheine 4'-phosphoryl)serine mark. The interval 1882-2146 is thioesterase (TE) domain; the sequence is LKQYRATSTL…ERVAAFIRST (265 aa). S1973 (for thioesterase activity) is an active-site residue.

Polyketide synthase; part of the Pks1 gene cluster that mediates the biosynthesis of an anthraquinone derivative pigment that contributes to conidial pigmentation that provides protection from UV radiation, heat and cold stress. The polyketide synthase Pks1 produces 1-acetyl-2,4,6,8-tetrahydroxy-9,10-anthraquinone though condensation of acetyl-CoA with malonyl-CoA. The dehydratase EthD and the laccase Mlac1 further convert the anthraquinone derivative into the final conidial pigment. The sequence is that of Polyketide synthase 1 from Metarhizium acridum (strain CQMa 102).